The following is a 263-amino-acid chain: Transmembrane protein 176B (263 aa).

4 helical membrane passes run leucine 61–phenylalanine 81, alanine 89–valine 109, valine 121–valine 141, and leucine 197–valine 217. 3 positions are modified to phosphoserine: serine 231, serine 240, and serine 253. The disordered stretch occupies residues glutamate 239–leucine 263.

The protein belongs to the TMEM176 family. Ubiquitously expressed with higher expression in lung, liver, kidney and colon. Expressed in cerebellar granule cells.

The protein localises to the nucleus membrane. Its function is as follows. May play a role in the process of maturation of dendritic cells. Required for the development of cerebellar granule cells. The chain is Transmembrane protein 176B (Tmem176b) from Mus musculus (Mouse).